Reading from the N-terminus, the 110-residue chain is UPF0060 membrane protein Psyr_3752 (110 aa).

A run of 4 helical transmembrane segments spans residues 5 to 25 (LWFF…WLWL), 28 to 48 (GKSA…ALLL), 59 to 79 (AYAA…GLVE), and 84 to 104 (LGTD…ILLG).

This sequence belongs to the UPF0060 family.

Its subcellular location is the cell inner membrane. The chain is UPF0060 membrane protein Psyr_3752 from Pseudomonas syringae pv. syringae (strain B728a).